A 144-amino-acid polypeptide reads, in one-letter code: Large ribosomal subunit protein uL15 (144 aa).

Positions 1–10 are enriched in basic and acidic residues; the sequence is MKLHELKPAE. Residues 1-52 form a disordered region; that stretch reads MKLHELKPAEGSRQVRNRVGRGTSSGNGKTAGRGQKGQKARGKVRLGFEGGQ. Positions 23–35 are enriched in gly residues; sequence TSSGNGKTAGRGQ.

The protein belongs to the universal ribosomal protein uL15 family. Part of the 50S ribosomal subunit.

In terms of biological role, binds to the 23S rRNA. This is Large ribosomal subunit protein uL15 from Ligilactobacillus salivarius (strain UCC118) (Lactobacillus salivarius).